A 212-amino-acid polypeptide reads, in one-letter code: MAQTDKPTCIPPELPKMLKEFAKAAIRAQPQDLIQWGADYFEALSRGETPPVREQSERVALCNWAELTPEVLKILHSQVAGRLIVHAEELAQMWKVVNLPADLFNSVMNVGRFTEEIEWLKFLALACSALGVTITKTLKIVCEVLSCDHNGGLPRIPFSTFQFLYTYIAEVDGEISASHVSRMLNYIEQEVIGPDGLITVNDFTQNPRVWLE.

In terms of domain architecture, RIIa spans 12–49; sequence PELPKMLKEFAKAAIRAQPQDLIQWGADYFEALSRGET. Ser-56 is subject to Phosphoserine. Residues 209 to 212 are interaction with RHPN1; that stretch reads VWLE.

This sequence belongs to the ropporin family. In terms of assembly, homodimer. Interacts with AKAP3. May interact with SPA17. Interacts with RHPN1. Interacts with FSCB; the interaction increases upon spermatozoa capacitation conditions. Interacts with CFAP61. In terms of processing, sumoylated, sumoylation decreases upon spermatozoa capacitation conditions.

The protein localises to the cell projection. Its subcellular location is the cilium. It is found in the flagellum. Functionally, important for male fertility. With ROPN1L, involved in fibrous sheath integrity and sperm motility, plays a role in PKA-dependent signaling processes required for spermatozoa capacitation. This Macaca fascicularis (Crab-eating macaque) protein is Ropporin-1 (ROPN1).